The primary structure comprises 510 residues: Inositol-3-phosphate synthase (510 aa).

NAD(+)-binding residues include Gly70, Gly71, Asn72, Asn73, Asp143, Ile180, Gln190, Arg193, Thr230, Ala231, Asn232, Thr233, Gly281, Ser282, Asp306, Ser309, Asn340, Asn341, Asp342, Lys355, Gly393, Asp394, Asp422, and Ser423.

This sequence belongs to the myo-inositol 1-phosphate synthase family. Requires NAD(+) as cofactor.

The protein localises to the cytoplasm. It is found in the cytosol. Its subcellular location is the nucleus. The enzyme catalyses D-glucose 6-phosphate = 1D-myo-inositol 3-phosphate. The protein operates within polyol metabolism; myo-inositol biosynthesis; myo-inositol from D-glucose 6-phosphate: step 1/2. Its function is as follows. Key enzyme in myo-inositol biosynthesis pathway that catalyzes the conversion of glucose 6-phosphate to 1-myo-inositol 1-phosphate in a NAD-dependent manner. This chain is Inositol-3-phosphate synthase, found in Sesamum indicum (Oriental sesame).